Consider the following 471-residue polypeptide: Glutamate--tRNA ligase 1 (471 aa).

A 'HIGH' region motif is present at residues 15–25 (PSPTGYLHIGG). The short motif at 243–247 (KLSKR) is the 'KMSKS' region element. An ATP-binding site is contributed by lysine 246.

This sequence belongs to the class-I aminoacyl-tRNA synthetase family. Glutamate--tRNA ligase type 1 subfamily. In terms of assembly, monomer.

The protein resides in the cytoplasm. It carries out the reaction tRNA(Glu) + L-glutamate + ATP = L-glutamyl-tRNA(Glu) + AMP + diphosphate. Its function is as follows. Catalyzes the attachment of glutamate to tRNA(Glu) in a two-step reaction: glutamate is first activated by ATP to form Glu-AMP and then transferred to the acceptor end of tRNA(Glu). In Cereibacter sphaeroides (strain ATCC 17023 / DSM 158 / JCM 6121 / CCUG 31486 / LMG 2827 / NBRC 12203 / NCIMB 8253 / ATH 2.4.1.) (Rhodobacter sphaeroides), this protein is Glutamate--tRNA ligase 1.